The chain runs to 217 residues: ATP phosphoribosyltransferase (217 aa).

It belongs to the ATP phosphoribosyltransferase family. Short subfamily. As to quaternary structure, heteromultimer composed of HisG and HisZ subunits.

The protein localises to the cytoplasm. The catalysed reaction is 1-(5-phospho-beta-D-ribosyl)-ATP + diphosphate = 5-phospho-alpha-D-ribose 1-diphosphate + ATP. Its pathway is amino-acid biosynthesis; L-histidine biosynthesis; L-histidine from 5-phospho-alpha-D-ribose 1-diphosphate: step 1/9. Its function is as follows. Catalyzes the condensation of ATP and 5-phosphoribose 1-diphosphate to form N'-(5'-phosphoribosyl)-ATP (PR-ATP). Has a crucial role in the pathway because the rate of histidine biosynthesis seems to be controlled primarily by regulation of HisG enzymatic activity. The chain is ATP phosphoribosyltransferase from Synechococcus sp. (strain WH7803).